Here is an 851-residue protein sequence, read N- to C-terminus: Meiotically up-regulated gene 87 protein (851 aa).

Belongs to the nucleoporin interacting component (NIC) family.

It localises to the nucleus envelope. Functionally, has a role in meiosis. The polypeptide is Meiotically up-regulated gene 87 protein (mug87) (Schizosaccharomyces pombe (strain 972 / ATCC 24843) (Fission yeast)).